The chain runs to 320 residues: Cytochrome c biogenesis protein CcsA (320 aa).

A run of 8 helical transmembrane segments spans residues 9-29 (ILAH…WGTL), 36-56 (LSSS…GLLI), 70-90 (LYES…LLEV), 97-117 (WLGA…TLGL), 143-163 (ILFS…LLVI), 227-247 (AIGL…IWAN), 254-274 (WSWD…AIYL), and 288-308 (AIVA…VNLL).

It belongs to the CcmF/CycK/Ccl1/NrfE/CcsA family. May interact with Ccs1.

It localises to the plastid. It is found in the chloroplast thylakoid membrane. Functionally, required during biogenesis of c-type cytochromes (cytochrome c6 and cytochrome f) at the step of heme attachment. This is Cytochrome c biogenesis protein CcsA from Pinus thunbergii (Japanese black pine).